A 500-amino-acid chain; its full sequence is Protein C13 (500 aa).

A BTB domain is found at 27–89; that stretch reads EEIVFIMTVG…IETGIVTIDL (63 aa). Kelch repeat units follow at residues 301–348, 349–395, 397–440, and 441–490; these read ILYL…IFKN, RIYV…GTDN, LYVV…YHHG, and YIYM…IIED.

It belongs to the poxviruses Kelch family.

This Swinepox virus (strain Kasza) (SWPV) protein is Protein C13.